Reading from the N-terminus, the 221-residue chain is Max dimerization protein 1 (221 aa).

The Nuclear localization signal motif lies at arginine 21 to lysine 49. Disordered stretches follow at residues histidine 28–arginine 67 and aspartate 176–tyrosine 202. A bHLH domain is found at asparagine 55 to leucine 107. A compositionally biased stretch (polar residues) spans serine 192 to tyrosine 202.

Efficient DNA binding requires dimerization with another bHLH protein. Binds DNA as a heterodimer with MAX.

The protein localises to the nucleus. Functionally, transcriptional repressor. MAD binds with MAX to form a sequence-specific DNA-binding protein complex which recognizes the core sequence 5'-CAC[GA]TG-3'. MAD thus antagonizes MYC transcriptional activity by competing for MAX. The polypeptide is Max dimerization protein 1 (mxd1) (Xenopus tropicalis (Western clawed frog)).